The chain runs to 265 residues: Enolase-phosphatase E1 (265 aa).

Mg(2+) is bound by residues Asp18 and Glu20. Substrate-binding positions include 144-145 (SS) and Lys188. Asp215 is a Mg(2+) binding site.

Belongs to the HAD-like hydrolase superfamily. MasA/MtnC family. As to quaternary structure, monomer. Mg(2+) serves as cofactor.

The protein resides in the cytoplasm. It localises to the nucleus. The catalysed reaction is 5-methylsulfanyl-2,3-dioxopentyl phosphate + H2O = 1,2-dihydroxy-5-(methylsulfanyl)pent-1-en-3-one + phosphate. Its pathway is amino-acid biosynthesis; L-methionine biosynthesis via salvage pathway; L-methionine from S-methyl-5-thio-alpha-D-ribose 1-phosphate: step 3/6. The protein operates within amino-acid biosynthesis; L-methionine biosynthesis via salvage pathway; L-methionine from S-methyl-5-thio-alpha-D-ribose 1-phosphate: step 4/6. Bifunctional enzyme that catalyzes the enolization of 2,3-diketo-5-methylthiopentyl-1-phosphate (DK-MTP-1-P) into the intermediate 2-hydroxy-3-keto-5-methylthiopentenyl-1-phosphate (HK-MTPenyl-1-P), which is then dephosphorylated to form the acireductone 1,2-dihydroxy-3-keto-5-methylthiopentene (DHK-MTPene). This chain is Enolase-phosphatase E1, found in Candida albicans (strain SC5314 / ATCC MYA-2876) (Yeast).